Reading from the N-terminus, the 191-residue chain is dCTP deaminase, dUMP-forming (191 aa).

DCTP contacts are provided by residues 101–106 (KSSLGR), Asp-119, 127–129 (TLE), Gln-148, Tyr-162, and Gln-174. The active-site Proton donor/acceptor is Glu-129. Residues 163–191 (GSPVYGSRYQGQRGPTPSRSWQNFHRTKI) are disordered. Residues 171-191 (YQGQRGPTPSRSWQNFHRTKI) show a composition bias toward polar residues.

This sequence belongs to the dCTP deaminase family. In terms of assembly, homotrimer.

The catalysed reaction is dCTP + 2 H2O = dUMP + NH4(+) + diphosphate. It participates in pyrimidine metabolism; dUMP biosynthesis; dUMP from dCTP: step 1/1. Its function is as follows. Bifunctional enzyme that catalyzes both the deamination of dCTP to dUTP and the hydrolysis of dUTP to dUMP without releasing the toxic dUTP intermediate. In Acidothermus cellulolyticus (strain ATCC 43068 / DSM 8971 / 11B), this protein is dCTP deaminase, dUMP-forming.